Reading from the N-terminus, the 1254-residue chain is MKKHRRALALVSCLFLCSLVWLPSWRVCCKESSSASASSYYSQDDNCALENEDVQFQKKDEREGPINAESLGKSGSNLPISPKEHKLKDDSIVDVQNTESKKLSPPVVETLPTVDLHEESSNAVVDSETVENISSSSTSEITPISKLDEIEKSGTIPIAKPSETEQSETDCDVGEALDASAPIEQPSFVSPPDSLVGQHIENVSSSHGKGKITKSEFESKVSASEQGGGDPKSALNASDNLKNESSDYTKPGDIDPTSVASPKDPEDIPTFDEWKKKVMEVEKEKSQSMHASSNGGSHATKKVQKNRNNYASVECGAKILAANPEAKSTSAILIENMDLYMLNPCSTKIWFVIELCEPIQVKQLDIANYELFSSTPKDFLVSISDRYPTNKWIKLGTFHGRDERNVQSFPLDEQMYAKYVKMFIKYIKVELLSHFGSEHFCPLSLIRVFGTSMVEEYEEIADSQYHSERQELFDEDYDYPLDYNTGEDKSSKNLLGSATNAILNMVNIAANILGAKTEDLTEGNKSISENATATAAPKMPESTPVSTPVPSPEYVTTEVHTHDMEPSTPDTPKESPIVQLVQEEEEEASPSTVTLLGSGEQEDESSPWFESETQIFCSELTTICCISSFSEYIYKWCSVRVALYRQRSRTALSKGKDYLVLAQPPLLLPAESVDVSVLQPLSGELENTNIEREAETVVLGDLSSSMHQDDLVNHTVDAVELEPSHSQTLSQSLLLDITPEINPLPKIEVSESVEYEAGHIPSPVIPQESSVEIDNETEQKSESFSSIEKPSITYETNKVNELMDNIIKEDVNSMQIFTKLSETIVPPINTATVPDNEDGEAKMNIADTAKQTLISVVDSSSLPEVKEEEQSPEDALLRGLQRTATDFYAELQNSTDLGYANGNLVHGSNQKESVFMRLNNRIKALEVNMSLSGRYLEELSQRYRKQMEEMQKAFNKTIVKLQNTSRIAEEQDQRQTEAIQLLQAQLTNMTQLVSNLSATVAELKREVSDRQSYLVISLVLCVVLGLMLCMQRCRNTSQFDGDYISKLPKSNQYPSPKRCFSSYDDMNLKRRTSFPLMRSKSLQLTGKEVDPNDLYIVEPLKFSPEKKKKRCKYKIEKIETIKPEEPLHPIANGDIKGRKPFTNQRDFSNMGEVYHSSYKGPPSEGSSETSSQSEESYFCGISACTSLCNGQSQKTKTEKRALKRRRSKVQDQGKLIKTLIQTKSGSLPSLHDIIKGNKEITVGTFGVTAVSGHI.

A signal peptide spans 1 to 29 (MKKHRRALALVSCLFLCSLVWLPSWRVCC). Disordered stretches follow at residues 58 to 88 (KKDE…HKLK), 118 to 270 (EESS…DIPT), and 282 to 304 (EKEK…KKVQ). A compositionally biased stretch (low complexity) spans 130–145 (VENISSSSTSEITPIS). The span at 165–175 (EQSETDCDVGE) shows a compositional bias: acidic residues. Residues Asn202 and Asn236 are each glycosylated (N-linked (GlcNAc...) asparagine). The segment covering 241–253 (LKNESSDYTKPGD) has biased composition (basic and acidic residues). The SUN domain maps to 284 to 453 (EKSQSMHASS…SLIRVFGTSM (170 aa)). Polar residues predominate over residues 288–297 (SMHASSNGGS). An N-linked (GlcNAc...) asparagine glycan is attached at Asn524. Disordered stretches follow at residues 530–553 (NATA…PSPE), 583–605 (EEEE…EDES), and 759–788 (HIPS…SSIE). Positions 540–553 (PESTPVSTPVPSPE) are enriched in low complexity. The stretch at 909–1009 (NQKESVFMRL…VAELKREVSD (101 aa)) forms a coiled coil. 2 N-linked (GlcNAc...) asparagine glycosylation sites follow: Asn928 and Asn955. A helical transmembrane segment spans residues 1011 to 1031 (QSYLVISLVLCVVLGLMLCMQ). Position 1081 is a phosphoserine (Ser1081). The disordered stretch occupies residues 1152–1172 (EVYHSSYKGPPSEGSSETSSQ). Residues 1163 to 1172 (SEGSSETSSQ) show a composition bias toward low complexity.

O-glycosylated. O-mannosylated by POMT1 and POMT2 and elongated by POMGNT1. In terms of processing, N-glycosylated. As to expression, highly expressed in pancreas and testis and to a lower extent in prostate, ovary, heart, thymus, small intestine and spleen.

Its subcellular location is the rough endoplasmic reticulum membrane. Its function is as follows. Required for bone modeling during late embryogenesis. Regulates type I collagen synthesis in osteoblasts during their postnatal maturation. The polypeptide is SUN domain-containing ossification factor (SUCO) (Homo sapiens (Human)).